The primary structure comprises 155 residues: Small ribosomal subunit protein uS7 (155 aa).

This sequence belongs to the universal ribosomal protein uS7 family. Part of the 30S ribosomal subunit. Contacts proteins S9 and S11.

Functionally, one of the primary rRNA binding proteins, it binds directly to 16S rRNA where it nucleates assembly of the head domain of the 30S subunit. Is located at the subunit interface close to the decoding center, probably blocks exit of the E-site tRNA. This is Small ribosomal subunit protein uS7 from Corynebacterium glutamicum (strain R).